The primary structure comprises 275 residues: Intercellular adhesion molecule 2 (275 aa).

Residues 1–24 (MSSFGYRTLTVALFALICCPGSDE) form the signal peptide. Topologically, residues 25 to 223 (KVFEVHVRPK…EIYEPVSDSQ (199 aa)) are extracellular. Positions 41–98 (KASLEVNCSTTCNQPEVGGLETSLDKILLDEQAQWKHYLVSNISHDTVLQCHFTCSGK) constitute an Ig-like C2-type 1 domain. N-linked (GlcNAc...) asparagine glycosylation is found at Asn47, Asn82, Asn105, Asn153, Asn158, Asn176, and Asn187. Cystine bridges form between Cys48-Cys91 and Cys52-Cys95. The Ig-like C2-type 2 domain occupies 127–197 (GKSFTIECRV…FSCLAVLDLI (71 aa)). A disulfide bridge connects residues Cys134 and Cys190. A helical transmembrane segment spans residues 224 to 248 (MVIIVTVVSVLLSLFVTSVLLCFIF). At 249–275 (GQHLRQQRMGTYGVRAAWRRLPQAFRP) the chain is on the cytoplasmic side. A required for interaction with EZR, MSN and RDX and co-localization to microvilli region spans residues 251–275 (HLRQQRMGTYGVRAAWRRLPQAFRP).

This sequence belongs to the immunoglobulin superfamily. ICAM family. As to quaternary structure, interacts with RDX, EZR and MSN.

Its subcellular location is the membrane. The protein resides in the cell projection. It is found in the microvillus. In terms of biological role, ICAM proteins are ligands for the leukocyte adhesion protein LFA-1 (integrin alpha-L/beta-2). ICAM2 may play a role in lymphocyte recirculation by blocking LFA-1-dependent cell adhesion. It mediates adhesive interactions important for antigen-specific immune response, NK-cell mediated clearance, lymphocyte recirculation, and other cellular interactions important for immune response and surveillance. In Gorilla gorilla gorilla (Western lowland gorilla), this protein is Intercellular adhesion molecule 2 (ICAM2).